The following is a 406-amino-acid chain: MSLIRVNGEAFKLSLESLEEDPFETKETLETLIKQTSVVLLAAGESRRFSQTIKKQWLRSNHTPLWLSVYESFKEALDFKEIILVVSELDYIYIKRHYPEIKLVKGGASRQESVRNALKIIDSAYTLTSDVARGLANIEALKNLFLTLQQTSHYCIAPYLPCYDTAIYYNEALDREAIKLIQTPQLSHTKALQSALNQGDFKDESSAILQAFPDRVSYIEGSKDLHKLTTSGDLKHFTLFFNPAKDTFIGMGFDTHAFIKDKPMVLGGVVLDCEFGLKAHSDGDALLHAVIDAILGAIKGGDIGEWFPDNDPKYKNASSKELLKIVLDFSQSIGFELFEMGATIFSEIPKITPYKPAILENLSQLLGLEKSQISLKATTMEKMGFIGKQEGLLVQAHVSMRYKQKL.

Positions M1–T247 are 2-C-methyl-D-erythritol 4-phosphate cytidylyltransferase. The interval F248–L406 is 2-C-methyl-D-erythritol 2,4-cyclodiphosphate synthase. A divalent metal cation-binding residues include D254 and H256. 4-CDP-2-C-methyl-D-erythritol 2-phosphate-binding positions include D254 to H256 and H280 to S281. Position 288 (H288) interacts with a divalent metal cation. 4-CDP-2-C-methyl-D-erythritol 2-phosphate is bound by residues D302 to G304, F307 to D311, T378 to E381, F385, and K388.

In the N-terminal section; belongs to the IspD/TarI cytidylyltransferase family. IspD subfamily. It in the C-terminal section; belongs to the IspF family. It depends on a divalent metal cation as a cofactor.

It carries out the reaction 2-C-methyl-D-erythritol 4-phosphate + CTP + H(+) = 4-CDP-2-C-methyl-D-erythritol + diphosphate. The catalysed reaction is 4-CDP-2-C-methyl-D-erythritol 2-phosphate = 2-C-methyl-D-erythritol 2,4-cyclic diphosphate + CMP. The protein operates within isoprenoid biosynthesis; isopentenyl diphosphate biosynthesis via DXP pathway; isopentenyl diphosphate from 1-deoxy-D-xylulose 5-phosphate: step 2/6. Its pathway is isoprenoid biosynthesis; isopentenyl diphosphate biosynthesis via DXP pathway; isopentenyl diphosphate from 1-deoxy-D-xylulose 5-phosphate: step 4/6. Bifunctional enzyme that catalyzes the formation of 4-diphosphocytidyl-2-C-methyl-D-erythritol from CTP and 2-C-methyl-D-erythritol 4-phosphate (MEP) (IspD), and catalyzes the conversion of 4-diphosphocytidyl-2-C-methyl-D-erythritol 2-phosphate (CDP-ME2P) to 2-C-methyl-D-erythritol 2,4-cyclodiphosphate (ME-CPP) with a corresponding release of cytidine 5-monophosphate (CMP) (IspF). The sequence is that of Bifunctional enzyme IspD/IspF from Helicobacter pylori (strain ATCC 700392 / 26695) (Campylobacter pylori).